Consider the following 91-residue polypeptide: DNA-directed RNA polymerase subunit Rpo11 (91 aa).

Belongs to the archaeal Rpo11/eukaryotic RPB11/RPC19 RNA polymerase subunit family. In terms of assembly, part of the RNA polymerase complex.

The protein localises to the cytoplasm. The enzyme catalyses RNA(n) + a ribonucleoside 5'-triphosphate = RNA(n+1) + diphosphate. Its function is as follows. DNA-dependent RNA polymerase (RNAP) catalyzes the transcription of DNA into RNA using the four ribonucleoside triphosphates as substrates. The sequence is that of DNA-directed RNA polymerase subunit Rpo11 from Methanococcoides burtonii (strain DSM 6242 / NBRC 107633 / OCM 468 / ACE-M).